A 364-amino-acid chain; its full sequence is tRNA 2-selenouridine synthase (364 aa).

Residues 15 to 138 (FVNDTPLMDM…LRRFLIETID (124 aa)) enclose the Rhodanese domain. Cysteine 98 serves as the catalytic S-selanylcysteine intermediate.

Belongs to the SelU family. Monomer.

It carries out the reaction 5-methylaminomethyl-2-thiouridine(34) in tRNA + selenophosphate + (2E)-geranyl diphosphate + H2O + H(+) = 5-methylaminomethyl-2-selenouridine(34) in tRNA + (2E)-thiogeraniol + phosphate + diphosphate. The catalysed reaction is 5-methylaminomethyl-2-thiouridine(34) in tRNA + (2E)-geranyl diphosphate = 5-methylaminomethyl-S-(2E)-geranyl-thiouridine(34) in tRNA + diphosphate. It catalyses the reaction 5-methylaminomethyl-S-(2E)-geranyl-thiouridine(34) in tRNA + selenophosphate + H(+) = 5-methylaminomethyl-2-(Se-phospho)selenouridine(34) in tRNA + (2E)-thiogeraniol. The enzyme catalyses 5-methylaminomethyl-2-(Se-phospho)selenouridine(34) in tRNA + H2O = 5-methylaminomethyl-2-selenouridine(34) in tRNA + phosphate. Involved in the post-transcriptional modification of the uridine at the wobble position (U34) of tRNA(Lys), tRNA(Glu) and tRNA(Gln). Catalyzes the conversion of 2-thiouridine (S2U-RNA) to 2-selenouridine (Se2U-RNA). Acts in a two-step process involving geranylation of 2-thiouridine (S2U) to S-geranyl-2-thiouridine (geS2U) and subsequent selenation of the latter derivative to 2-selenouridine (Se2U) in the tRNA chain. The chain is tRNA 2-selenouridine synthase from Photobacterium profundum (strain SS9).